A 494-amino-acid polypeptide reads, in one-letter code: MLTWTLWCGLLFLLWIYFLWSRRRFYLLTLKIPGPLGYPILGMAHWLMRREDILNAFGCFLDKHGPTIFSWLGPIPFMIVSDPQVVQDIFTSPHCVNKGIIYKAVDDGAGVGLFSLKDPRWSIHRKLLNPAFGHKVLLSFLPIFNRETALLLDQLEPLQDDGEKDLIPLLQSFTLGIATQTTMGSDVKDEESFRSNSLLGRYQCILETMTDMCFSPWLNSRFCRQLAGKESHYYQAKTEIRQFIRKIIERKLAEDEMGALPSIQSNDKNLFLNLVTDLMRRGVFTLKNVEDESNIIVFGAFETTANAVYYTLMLLAMFPEYQERAFEEIKTIFPNTGDFDVSYADTQQMVYLDLILNESMRVIPPVPVVSRQTSQDLKLSNGIVVPKGVQIAIDIYHMHRSKKIWGPDAETFNPDHFLPHNIQDKHPYAYIPFTKGIRNCIGWRYALISAKVTLAKLLRNYRFKTSFPFENLYFVEDITMKLKSVPLLELQKRT.

Cys-440 contacts heme.

Belongs to the cytochrome P450 family. Requires heme as cofactor.

It is found in the endoplasmic reticulum membrane. It localises to the microsome membrane. Functionally, may be involved in the metabolism of insect hormones and in the breakdown of synthetic insecticides. This is Probable cytochrome P450 313a4 (Cyp313a4) from Drosophila melanogaster (Fruit fly).